We begin with the raw amino-acid sequence, 136 residues long: Cancer/testis antigen 62 (136 aa).

Positions 1-22 are disordered; sequence MMHTTSYRRLSPPHLTDQPSAY.

Testis specific. Expressed in cancer cell lines.

This Homo sapiens (Human) protein is Cancer/testis antigen 62 (CT62).